Consider the following 208-residue polypeptide: Uracil phosphoribosyltransferase (208 aa).

5-phospho-alpha-D-ribose 1-diphosphate is bound by residues arginine 78, arginine 103, and 130-138 (DPMLATGGS). Uracil is bound by residues isoleucine 193 and 198-200 (GDA). Aspartate 199 contacts 5-phospho-alpha-D-ribose 1-diphosphate.

This sequence belongs to the UPRTase family. Requires Mg(2+) as cofactor.

The catalysed reaction is UMP + diphosphate = 5-phospho-alpha-D-ribose 1-diphosphate + uracil. It functions in the pathway pyrimidine metabolism; UMP biosynthesis via salvage pathway; UMP from uracil: step 1/1. With respect to regulation, allosterically activated by GTP. Its function is as follows. Catalyzes the conversion of uracil and 5-phospho-alpha-D-ribose 1-diphosphate (PRPP) to UMP and diphosphate. The chain is Uracil phosphoribosyltransferase from Acholeplasma laidlawii (strain PG-8A).